A 264-amino-acid chain; its full sequence is Probable glycerol uptake facilitator protein (264 aa).

2 consecutive transmembrane segments (helical) span residues 13–33 (WIGA…GAGS) and 51–71 (TAAF…NSLF). An NPA 1 motif is present at residues 78-80 (NPA). Transmembrane regions (helical) follow at residues 104–124 (IPLL…GAML), 162–182 (FATE…AGSF), and 195–215 (VPML…GTAI). An NPA 2 motif is present at residues 216 to 218 (NPA). The helical transmembrane segment at 244 to 264 (IPVAAPLSASVILGVLVAVIV) threads the bilayer.

This sequence belongs to the MIP/aquaporin (TC 1.A.8) family.

Its subcellular location is the cell membrane. The catalysed reaction is glycerol(in) = glycerol(out). In terms of biological role, mediates glycerol diffusion across the cytoplasmic membrane via a pore-type mechanism. This is Probable glycerol uptake facilitator protein (glpF) from Mycoplasma pneumoniae (strain ATCC 29342 / M129 / Subtype 1) (Mycoplasmoides pneumoniae).